A 301-amino-acid chain; its full sequence is UDP-N-acetylenolpyruvoylglucosamine reductase (301 aa).

The FAD-binding PCMH-type domain occupies 27–194 (RVGGPADVVF…LDAIFEGTPD (168 aa)). R172 is a catalytic residue. Catalysis depends on S223, which acts as the Proton donor. The active site involves E293.

This sequence belongs to the MurB family. Requires FAD as cofactor.

The protein localises to the cytoplasm. The enzyme catalyses UDP-N-acetyl-alpha-D-muramate + NADP(+) = UDP-N-acetyl-3-O-(1-carboxyvinyl)-alpha-D-glucosamine + NADPH + H(+). Its pathway is cell wall biogenesis; peptidoglycan biosynthesis. Functionally, cell wall formation. This chain is UDP-N-acetylenolpyruvoylglucosamine reductase, found in Caulobacter vibrioides (strain NA1000 / CB15N) (Caulobacter crescentus).